Reading from the N-terminus, the 109-residue chain is uncharacterized protein (109 aa).

This is an uncharacterized protein from Autographa californica nuclear polyhedrosis virus (AcMNPV).